A 608-amino-acid polypeptide reads, in one-letter code: Elongation factor 4 (608 aa).

Residues 11–193 (DRIRNFSIIA…QIVQKIPAPS (183 aa)) enclose the tr-type G domain. Residues 23–28 (DHGKST) and 140–143 (NKID) each bind GTP.

This sequence belongs to the TRAFAC class translation factor GTPase superfamily. Classic translation factor GTPase family. LepA subfamily.

The protein localises to the cell membrane. The enzyme catalyses GTP + H2O = GDP + phosphate + H(+). Its function is as follows. Required for accurate and efficient protein synthesis under certain stress conditions. May act as a fidelity factor of the translation reaction, by catalyzing a one-codon backward translocation of tRNAs on improperly translocated ribosomes. Back-translocation proceeds from a post-translocation (POST) complex to a pre-translocation (PRE) complex, thus giving elongation factor G a second chance to translocate the tRNAs correctly. Binds to ribosomes in a GTP-dependent manner. The protein is Elongation factor 4 of Anoxybacillus flavithermus (strain DSM 21510 / WK1).